The chain runs to 614 residues: Dihydroxy-acid dehydratase (614 aa).

Asp-81 contributes to the Mg(2+) binding site. Cys-122 contacts [2Fe-2S] cluster. Residues Asp-123 and Lys-124 each coordinate Mg(2+). N6-carboxylysine is present on Lys-124. A [2Fe-2S] cluster-binding site is contributed by Cys-193. Position 489 (Glu-489) interacts with Mg(2+). Ser-515 acts as the Proton acceptor in catalysis.

Belongs to the IlvD/Edd family. Homodimer. The cofactor is [2Fe-2S] cluster. It depends on Mg(2+) as a cofactor.

It carries out the reaction (2R)-2,3-dihydroxy-3-methylbutanoate = 3-methyl-2-oxobutanoate + H2O. The catalysed reaction is (2R,3R)-2,3-dihydroxy-3-methylpentanoate = (S)-3-methyl-2-oxopentanoate + H2O. The protein operates within amino-acid biosynthesis; L-isoleucine biosynthesis; L-isoleucine from 2-oxobutanoate: step 3/4. It participates in amino-acid biosynthesis; L-valine biosynthesis; L-valine from pyruvate: step 3/4. Functions in the biosynthesis of branched-chain amino acids. Catalyzes the dehydration of (2R,3R)-2,3-dihydroxy-3-methylpentanoate (2,3-dihydroxy-3-methylvalerate) into 2-oxo-3-methylpentanoate (2-oxo-3-methylvalerate) and of (2R)-2,3-dihydroxy-3-methylbutanoate (2,3-dihydroxyisovalerate) into 2-oxo-3-methylbutanoate (2-oxoisovalerate), the penultimate precursor to L-isoleucine and L-valine, respectively. The chain is Dihydroxy-acid dehydratase from Saccharophagus degradans (strain 2-40 / ATCC 43961 / DSM 17024).